Here is a 388-residue protein sequence, read N- to C-terminus: Succinate--CoA ligase [ADP-forming] subunit beta (388 aa).

ATP is bound by residues K46, G53 to G55, E99, C102, and E107. 2 residues coordinate Mg(2+): N199 and D213. Substrate is bound by residues N264 and G321–V323.

Belongs to the succinate/malate CoA ligase beta subunit family. Heterotetramer of two alpha and two beta subunits. The cofactor is Mg(2+).

It carries out the reaction succinate + ATP + CoA = succinyl-CoA + ADP + phosphate. The enzyme catalyses GTP + succinate + CoA = succinyl-CoA + GDP + phosphate. The protein operates within carbohydrate metabolism; tricarboxylic acid cycle; succinate from succinyl-CoA (ligase route): step 1/1. Succinyl-CoA synthetase functions in the citric acid cycle (TCA), coupling the hydrolysis of succinyl-CoA to the synthesis of either ATP or GTP and thus represents the only step of substrate-level phosphorylation in the TCA. The beta subunit provides nucleotide specificity of the enzyme and binds the substrate succinate, while the binding sites for coenzyme A and phosphate are found in the alpha subunit. The sequence is that of Succinate--CoA ligase [ADP-forming] subunit beta from Actinobacillus pleuropneumoniae serotype 5b (strain L20).